Reading from the N-terminus, the 238-residue chain is Purine nucleoside phosphorylase DeoD-type (238 aa).

An a purine D-ribonucleoside-binding site is contributed by His4. Phosphate contacts are provided by residues Gly20, Arg24, Arg43, and 87 to 90; that span reads RVGS. Residues 179 to 181 and 203 to 204 each bind a purine D-ribonucleoside; these read EME and SD. Asp204 acts as the Proton donor in catalysis.

This sequence belongs to the PNP/UDP phosphorylase family. Homohexamer; trimer of homodimers.

The catalysed reaction is a purine D-ribonucleoside + phosphate = a purine nucleobase + alpha-D-ribose 1-phosphate. It catalyses the reaction a purine 2'-deoxy-D-ribonucleoside + phosphate = a purine nucleobase + 2-deoxy-alpha-D-ribose 1-phosphate. Catalyzes the reversible phosphorolytic breakdown of the N-glycosidic bond in the beta-(deoxy)ribonucleoside molecules, with the formation of the corresponding free purine bases and pentose-1-phosphate. In Haemophilus influenzae (strain PittEE), this protein is Purine nucleoside phosphorylase DeoD-type.